The sequence spans 61 residues: Cytotoxin homolog 3 (61 aa).

Cystine bridges form between Cys-3-Cys-22, Cys-15-Cys-39, Cys-43-Cys-54, and Cys-55-Cys-60.

This sequence belongs to the three-finger toxin family. Short-chain subfamily. Orphan group XV sub-subfamily. Expressed by the venom gland.

The protein resides in the secreted. It is found in the target cell membrane. Has low cytotoxic activity. In Naja melanoleuca (Forest cobra), this protein is Cytotoxin homolog 3.